A 189-amino-acid chain; its full sequence is MNKDILTQNYAVALFDNAKSDNTQDKILEEVNLVTSIIEDNIEVKELLSSPIVNKVDKIGVINSLVKNIKISKIMQNFLLLLIKNSRTSILADIANTYSKLLYESKNIKIVQVISANKLKPTEQEWVKTNIEKELKQETKINFEIDPTIMGGIVIKYDSILQDYSIKGSLDKIAKALQSVNVFDCHPVA.

The protein belongs to the ATPase delta chain family. In terms of assembly, F-type ATPases have 2 components, F(1) - the catalytic core - and F(0) - the membrane proton channel. F(1) has five subunits: alpha(3), beta(3), gamma(1), delta(1), epsilon(1). F(0) has three main subunits: a(1), b(2) and c(10-14). The alpha and beta chains form an alternating ring which encloses part of the gamma chain. F(1) is attached to F(0) by a central stalk formed by the gamma and epsilon chains, while a peripheral stalk is formed by the delta and b chains.

The protein localises to the cell inner membrane. Functionally, f(1)F(0) ATP synthase produces ATP from ADP in the presence of a proton or sodium gradient. F-type ATPases consist of two structural domains, F(1) containing the extramembraneous catalytic core and F(0) containing the membrane proton channel, linked together by a central stalk and a peripheral stalk. During catalysis, ATP synthesis in the catalytic domain of F(1) is coupled via a rotary mechanism of the central stalk subunits to proton translocation. Its function is as follows. This protein is part of the stalk that links CF(0) to CF(1). It either transmits conformational changes from CF(0) to CF(1) or is implicated in proton conduction. This is ATP synthase subunit delta from Rickettsia bellii (strain OSU 85-389).